Here is a 65-residue protein sequence, read N- to C-terminus: Small ribosomal subunit protein bS21 (65 aa).

Basic residues predominate over residues R46 to Q57. Positions R46 to S65 are disordered.

It belongs to the bacterial ribosomal protein bS21 family.

The sequence is that of Small ribosomal subunit protein bS21 from Chlorobaculum tepidum (strain ATCC 49652 / DSM 12025 / NBRC 103806 / TLS) (Chlorobium tepidum).